Consider the following 68-residue polypeptide: DNA-directed RNA polymerase subunit omega (68 aa).

The protein belongs to the RNA polymerase subunit omega family. As to quaternary structure, the RNAP catalytic core consists of 2 alpha, 1 beta, 1 beta' and 1 omega subunit. When a sigma factor is associated with the core the holoenzyme is formed, which can initiate transcription.

It catalyses the reaction RNA(n) + a ribonucleoside 5'-triphosphate = RNA(n+1) + diphosphate. Functionally, promotes RNA polymerase assembly. Latches the N- and C-terminal regions of the beta' subunit thereby facilitating its interaction with the beta and alpha subunits. The protein is DNA-directed RNA polymerase subunit omega of Dechloromonas aromatica (strain RCB).